We begin with the raw amino-acid sequence, 92 residues long: Kinetoplastid membrane protein 11 (92 aa).

Belongs to the KMP-11 family. In terms of assembly, monomer.

It is found in the cytoplasm. It localises to the cytoskeleton. In terms of biological role, may be involved in the regulation of the cytoskeleton through interaction with the subpellicular microtubules. May be involved in parasite mobility and attachment to the surface of the host cell. Behaves as a strong immunogen during infection. The chain is Kinetoplastid membrane protein 11 (KMP-11/1) from Trypanosoma brucei brucei.